The sequence spans 131 residues: Ribosomally synthesized cyclic peptide phomopsin precursor gigA (131 aa).

Residues Met1–Ala18 form the signal peptide. Propeptides lie at residues Ala19–Arg38, Ala48–Arg65, Ala75–Arg92, Ala102–Arg119, and Ala129–Met131.

Post-translationally, gigA is processed by several endopeptidases including kexin proteases to produce 2 identical copies of the nonaxapeptide Ile-Asn-Phe-Lys-Ile-Pro-Tyr-Thr-Gly, one copy of the nonaketide Ile-Gly-Phe-Lys-Leu-Pro-Tyr-Arg-Gly and one copy of the nonaketide Pro-Asn-Phe-Lys-Met-Pro-Tyr-Arg-Gly, that are further modified into phomapsins B, C and A, respectively. After being excised from the precursor peptide, the core peptides are cyclized and modified post-translationally by enzymes encoded within the gene cluster. Epichloecyclin biosynthesis requires only dimethylation of the side-chain amino group of the conserved lysine for completion.

Its pathway is mycotoxin biosynthesis. Functionally, ribosomally synthesized cyclic peptide phomopsin precursor; part of the gene cluster that mediates the biosynthesis of the epichloecyclins, a group of nonapeptides, with a likely cyclic structure and dimethylation of the conserved lysine. The gigA translated product contains 4 repeated peptide embedding the nonapeptide Ile-Asn-Phe-Lys-Ile-Pro-Tyr-Thr-Gly in repeats 1 and 2, Ile-Gly-Phe-Lys-Leu-Pro-Tyr-Arg-Gly in repeat 3, and Pro-Asn-Phe-Lys-Met-Pro-Tyr-Arg-Gly in repeat 4 that are converted into epichloecyclins B, C and A, respectively. Moreover, removal of the last Gly residue in epichloecyclins B and C leads to epichloecyclins D and E, respectively. The sequence is that of Ribosomally synthesized cyclic peptide phomopsin precursor gigA (nc25) from Epichloe festucae (strain Fl1).